The primary structure comprises 247 residues: Cell division protein ZapD (247 aa).

This sequence belongs to the ZapD family. Interacts with FtsZ.

The protein localises to the cytoplasm. Its function is as follows. Cell division factor that enhances FtsZ-ring assembly. Directly interacts with FtsZ and promotes bundling of FtsZ protofilaments, with a reduction in FtsZ GTPase activity. The protein is Cell division protein ZapD of Escherichia fergusonii (strain ATCC 35469 / DSM 13698 / CCUG 18766 / IAM 14443 / JCM 21226 / LMG 7866 / NBRC 102419 / NCTC 12128 / CDC 0568-73).